A 340-amino-acid chain; its full sequence is Peroxisomal coenzyme A diphosphatase 1, peroxisomal (340 aa).

The transit peptide at 1 to 7 directs the protein to the peroxisome; that stretch reads MILSQRR. In terms of domain architecture, Nudix hydrolase spans 37–199; the sequence is KRNSAVIILL…DEDVKSYQAE (163 aa). Positions 77 to 99 match the Nudix box motif; that stretch reads GKADYFQETFESVARREAEEEIG. 2 residues coordinate Mg(2+): E93 and E97.

This sequence belongs to the Nudix hydrolase family. PCD1 subfamily. Requires Mn(2+) as cofactor. Mg(2+) is required as a cofactor. In terms of processing, the size of the cleaved transit peptide can be of 7 or 8 residues.

The protein resides in the peroxisome. It catalyses the reaction CoA + H2O = (R)-4'-phosphopantetheine + adenosine 3',5'-bisphosphate + 2 H(+). The enzyme catalyses CoA-disulfide + H2O = 4'-phosphopantetheinyl-CoA disulfide + adenosine 3',5'-bisphosphate + 2 H(+). The catalysed reaction is 8-oxo-dGTP + H2O = 8-oxo-dGMP + diphosphate + H(+). It carries out the reaction 2-oxo-dATP + H2O = 2-oxo-dAMP + diphosphate + H(+). Functionally, diphosphatase (pyrophosphatase) with specificity for coenzyme A and CoA derivatives. Catalyzes the hydrolysis of the diphosphate linkage in CoA to give 3',5'-ADP and 4'-phosphopantetheine. Prefers oxidized CoA disulfide (CoASSCoA) over CoA as a substrate. May be required to remove potentially toxic oxidized CoA disulfide from peroxisomes to maintain the capacity for beta-oxidation of fatty acids. Can also hydrolyze 8-oxo-dGTP and 2-OH-dATP in vitro; therefore it may function as a sanitizing enzyme for oxidized nucleotides and may contribute to prevention of spontaneous mutagenesis due to the misincorporation of these oxidized nucleotides during DNA synthesis. Shows moderate activity in vitro with several short chain acyl-CoA esters and very low activity on 3'-dephospho-CoA while is not active with (deoxy)nucleoside 5'-triphosphates, nucleoside 5'-di- or monophosphates, diadenosine polyphosphates, nucleoside 5'-diphosphosugars, cytidine 5'-diphosphoalcohols, NAD(+), NADH, or FAD. The polypeptide is Peroxisomal coenzyme A diphosphatase 1, peroxisomal (PCD1) (Saccharomyces cerevisiae (strain ATCC 204508 / S288c) (Baker's yeast)).